The following is a 62-amino-acid chain: Short neurotoxin 1 (62 aa).

A compositionally biased stretch (polar residues) spans 1-16 (LECHNQQSIQTPTTTG). The tract at residues 1-20 (LECHNQQSIQTPTTTGCSGG) is disordered. Intrachain disulfides connect cysteine 3/cysteine 24, cysteine 17/cysteine 41, cysteine 43/cysteine 54, and cysteine 55/cysteine 60.

Belongs to the three-finger toxin family. Short-chain subfamily. Type I alpha-neurotoxin sub-subfamily. Expressed by the venom gland.

The protein resides in the secreted. Binds to muscle nicotinic acetylcholine receptor (nAChR) and inhibit acetylcholine from binding to the receptor, thereby impairing neuromuscular transmission. The sequence is that of Short neurotoxin 1 from Naja kaouthia (Monocled cobra).